The following is a 238-amino-acid chain: Dolichyldiphosphatase 1 (238 aa).

Helical transmembrane passes span 33 to 53 (LAYLSLGPVFVIVGFVTLIIF), 100 to 120 (PSSHSQFMWFFSVYSFLFLYL), 130 to 150 (FLDLLWRHVLSLGLLAAAFLV), and 162 to 182 (WSQVLYGGIAGGLMAVAWFIF).

Belongs to the dolichyldiphosphatase family.

The protein resides in the endoplasmic reticulum membrane. It catalyses the reaction a di-trans,poly-cis-dolichyl diphosphate + H2O = a di-trans,poly-cis-dolichyl phosphate + phosphate + H(+). Its pathway is protein modification; protein glycosylation. In terms of biological role, required for efficient N-glycosylation. Necessary for maintaining optimal levels of dolichol-linked oligosaccharides. Hydrolyzes dolichyl pyrophosphate at a very high rate and dolichyl monophosphate at a much lower rate. Does not act on phosphatidate. In Plecturocebus moloch (Dusky titi monkey), this protein is Dolichyldiphosphatase 1 (DOLPP1).